A 409-amino-acid polypeptide reads, in one-letter code: Serine/threonine transporter SstT (409 aa).

A run of 9 helical transmembrane segments spans residues 17–37 (LVGQ…FFPA), 49–69 (FVSA…MASI), 83–103 (ILLL…IASF), 142–162 (ALIS…GIAF), 180–200 (VSLI…GLVA), 218–238 (LVVL…LIVF), 301–321 (GAAI…GIAV), 331–351 (VVAS…LLLI), and 357–377 (LFGI…IIAI).

The protein belongs to the dicarboxylate/amino acid:cation symporter (DAACS) (TC 2.A.23) family.

Its subcellular location is the cell inner membrane. The enzyme catalyses L-serine(in) + Na(+)(in) = L-serine(out) + Na(+)(out). The catalysed reaction is L-threonine(in) + Na(+)(in) = L-threonine(out) + Na(+)(out). Functionally, involved in the import of serine and threonine into the cell, with the concomitant import of sodium (symport system). The sequence is that of Serine/threonine transporter SstT from Pseudomonas aeruginosa (strain UCBPP-PA14).